Here is a 308-residue protein sequence, read N- to C-terminus: Glutaminase (308 aa).

Residues serine 66, asparagine 117, glutamate 162, asparagine 169, tyrosine 193, tyrosine 244, and valine 262 each contribute to the substrate site.

The protein belongs to the glutaminase family. As to quaternary structure, homotetramer.

It catalyses the reaction L-glutamine + H2O = L-glutamate + NH4(+). This chain is Glutaminase, found in Natranaerobius thermophilus (strain ATCC BAA-1301 / DSM 18059 / JW/NM-WN-LF).